The primary structure comprises 798 residues: MSFDPNLLHNNGHNGYPNGTSAALRETGVIEKLLTSYGFIQCSERQARLFFHCSQYNGNLQDLKVGDDVEFEVSSDRRTGKPIAVKLVKIKQEILPEERMNGQVVCAVPHNLESKSPAAPGQSPTGSVCYERNGEVFYLTYTPEDVEGNVQLETGDKINFVIDNNKHTGAVSARNIMLLKKKQARCQGVVCAMKEAFGFIERGDVVKEIFFHYSEFKGDLETLQPGDDVEFTIKDRNGKEVATDVRLLPQGTVIFEDISIEHFEGTVTKVIPKVPSKNQNDPLPGRIKVDFVIPKELPFGDKDTKSKVTLLEGDHVRFNISTDRRDKLERATNIEVLSNTFQFTNEAREMGVIAAMRDGFGFIKCVDRDVRMFFHFSEILDGNQLHIADEVEFTVVPDMLSAQRNHAIRIKKLPKGTVSFHSHSDHRFLGTVEKEATFSNPKTTSPNKGKEKEAEDGIIAYDDCGVKLTIAFQAKDVEGSTSPQIGDKVEFSISDKQRPGQQVATCVRLLGRNSNSKRLLGYVATLKDNFGFIETANHDKEIFFHYSEFSGDVDSLELGDMVEYSLSKGKGNKVSAEKVNKTHSVNGITEEADPTIYSGKVIRPLRSVDPTQTEYQGMIEIVEEGDMKGEVYPFGIVGMANKGDCLQKGESVKFQLCVLGQNAQTMAYNITPLRRATVECVKDQFGFINYEVGDSKKLFFHVKEVQDGIELQAGDEVEFSVILNQRTGKCSACNVWRVCEGPKAVAAPRPDRLVNRLKNITLDDASAPRLMVLRQPRGPDNSMGFGAERKIRQAGVID.

M1 is subject to N-acetylmethionine. Residues 26–87 (ETGVIEKLLT…RTGKPIAVKL (62 aa)) form the CSD 1 domain. At K81 the chain carries N6-acetyllysine. K91 participates in a covalent cross-link: Glycyl lysine isopeptide (Lys-Gly) (interchain with G-Cter in SUMO2). S123 carries the post-translational modification Phosphoserine. The CSD 2; truncated domain occupies 136–179 (VFYLTYTPEDVEGNVQLETGDKINFVIDNNKHTGAVSARNIMLL). In terms of domain architecture, CSD 3 spans 186 to 245 (CQGVVCAMKEAFGFIERGDVVKEIFFHYSEFKGDLETLQPGDDVEFTIKDRNGKEVATDV). S276 bears the Phosphoserine mark. A CSD 4; truncated domain is found at 297 to 337 (LPFGDKDTKSKVTLLEGDHVRFNISTDRRDKLERATNIEVL). CSD domains follow at residues 349 to 410 (EMGV…AIRI) and 447 to 507 (NKGK…ATCV). S514 carries the post-translational modification Phosphoserine. Positions 519 to 579 (LLGYVATLKD…KGNKVSAEKV (61 aa)) constitute a CSD 7 domain. A Phosphoserine modification is found at S584. 2 CSD domains span residues 610–670 (PTQT…AYNI) and 674–735 (RRAT…ACNV). Residues 748 to 789 (PRPDRLVNRLKNITLDDASAPRLMVLRQPRGPDNSMGFGAER) enclose the SUZ-C domain. T761 is modified (phosphothreonine).

It belongs to the UNR family. Component of a multi subunit autoregulatory ribonucleoprotein complex (ARC), at least composed of IGF2BP1, PABPC1 and CSDE1. Interacts with STRAP. Part of a complex associated with the FOS mCRD domain and consisting of PABPC1, PAIP1, HNRPD and SYNCRIP. The interaction with PABPC1 is direct and RNA-independent. Interacts with EIF4ENIF1/4E-T.

Its subcellular location is the cytoplasm. The protein localises to the stress granule. It localises to the P-body. Functionally, RNA-binding protein involved in translationally coupled mRNA turnover. Implicated with other RNA-binding proteins in the cytoplasmic deadenylation/translational and decay interplay of the FOS mRNA mediated by the major coding-region determinant of instability (mCRD) domain. Required for efficient formation of stress granules. In terms of biological role, (Microbial infection) Required for internal initiation of translation of human rhinovirus RNA. This chain is Cold shock domain-containing protein E1, found in Homo sapiens (Human).